We begin with the raw amino-acid sequence, 702 residues long: MGDEDWEAEILKPHVSSYVPVFEKDKYSSGANGDTFNRTSASSDIGESSKKENTSTTGGFGRGKGFGNRGFLNNKFEEGDSSGFWKESNNDCEDNQTRSRGFSKRGGCQDGNDSEASGPFRRGGRGSFRGCRGGFGLGRPNSESDQDQGTQRGGGLFGSRKPAASDSGNGDTYQSRSGSGRGGYKGLNEEVVTGSGKNSWKSETEGGESSDSQGPKVTYIPPPPPEDEDSIFAHYQTGINFDKYDTILVEVSGHDAPPAILTFEEANLCQTLNNNIAKAGYTKLTPVQKYSIPIVLAGRDLMACAQTGSGKTAAFLLPILAHMMRDGITASRFKELQEPECIIVAPTRELINQIYLEARKFSFGTCVRAVVIYGGTQFGHSVRQIVQGCNILCATPGRLMDIIGKEKIGLKQVKYLVLDEADRMLDMGFGPEMKKLISCPGMPSKEQRQTLLFSATFPEEIQRLAGDFLKSSYLFVAVGQVGGACRDVQQTILQVGQYSKREKLVEILRNIGDERTMVFVETKKKADFIATFLCQEKISTTSIHGDREQREREQALGDFRCGKCPVLVATSVAARGLDIENVQHVINFDLPSTIDEYVHRIGRTGRCGNTGRAISFFDTDSDNHLAQPLVKVLSDAQQDVPAWLEEIAFSTYVPPSFSSSTRGGAVFASVDTRKNYQGKHTLNTAGISSSQAPNPVDDESWD.

Residues Phe22–Glu228 are disordered. Residues Ser29–Gly46 are compositionally biased toward polar residues. 2 stretches are compositionally biased toward gly residues: residues Gly58 to Asn68 and Arg125 to Leu137. Polar residues-rich tracts occupy residues Asn141–Thr150 and Ser195–Pro215. 2 positions are modified to phosphoserine: Ser195 and Ser199. The interval Lys201 to Ile220 is interaction with RANBP9. Positions Leu261–Lys289 match the Q motif motif. The Helicase ATP-binding domain maps to Ile292–Phe475. Ala305 to Thr312 provides a ligand contact to ATP. A DEAD box motif is present at residues Asp419–Asp422. One can recognise a Helicase C-terminal domain in the interval Lys503 to Ala648. A compositionally biased stretch (polar residues) spans Thr681–Pro693. Residues Thr681 to Asp702 form a disordered region. A Phosphoserine modification is found at Ser700.

The protein belongs to the DEAD box helicase family. DDX4/VASA subfamily. Found in a mRNP complex, at least composed of TDRD1, TDRD6, TDRD7 and DDX4. Interacts with RANBP9. Interacts with RANBP10. Interacts with PIWIL2 and MAEL. Interacts with BMAL1 and CLOCK. Interacts with Tex19.1 and, probably, Tex19.2. Interacts with RBM46. As to expression, testis-specific.

The protein resides in the cytoplasm. It localises to the perinuclear region. The catalysed reaction is ATP + H2O = ADP + phosphate + H(+). ATP-dependent RNA helicase required during spermatogenesis to repress transposable elements and preventing their mobilization, which is essential for the germline integrity. Acts via the piRNA metabolic process, which mediates the repression of transposable elements during meiosis by forming complexes composed of piRNAs and Piwi proteins and governs the methylation and subsequent repression of transposons. Involved in the secondary piRNAs metabolic process, the production of piRNAs in fetal male germ cells through a ping-pong amplification cycle. Required for PIWIL2 slicing-triggered piRNA biogenesis: helicase activity enables utilization of one of the slice cleavage fragments generated by PIWIL2 and processing these pre-piRNAs into piRNAs. The chain is ATP-dependent RNA helicase DDX4 from Mus musculus (Mouse).